Here is a 589-residue protein sequence, read N- to C-terminus: uncharacterized protein (589 aa).

Helical transmembrane passes span 11–31, 57–77, 97–117, 190–210, and 213–233; these read LNWI…TMLA, LILM…FSVL, FWFF…HAIA, IEFT…GFNI, and GVVF…VWIG. Residues 57–357 form the ABC transmembrane type-1 domain; it reads LILMLLVLFI…FRLFYEQFTL (301 aa). Residues 390 to 587 enclose the ABC transporter domain; the sequence is VALKNFGIKD…QLKLDVCLLC (198 aa). 423 to 430 is an ATP binding site; sequence GASGTGKT.

The protein belongs to the ABC transporter superfamily.

The protein localises to the cell inner membrane. This is an uncharacterized protein from Haemophilus influenzae (strain ATCC 51907 / DSM 11121 / KW20 / Rd).